An 84-amino-acid chain; its full sequence is Molybdopterin synthase sulfur carrier subunit (84 aa).

A 1-thioglycine; alternate modification is found at Gly84. At Gly84 the chain carries Glycyl adenylate; alternate.

The protein belongs to the MoaD family. MOCS2A subfamily. As to quaternary structure, heterotetramer; composed of 2 small (MOCS2A) and 2 large (MOCS2B) subunits. C-terminal thiocarboxylation occurs in 2 steps, it is first acyl-adenylated (-COAMP) via the hesA/moeB/thiF part of MOCS3, then thiocarboxylated (-COSH) via the rhodanese domain of MOCS3.

It is found in the cytoplasm. The protein operates within cofactor biosynthesis; molybdopterin biosynthesis. Functionally, acts as a sulfur carrier required for molybdopterin biosynthesis. Component of the molybdopterin synthase complex that catalyzes the conversion of precursor Z into molybdopterin by mediating the incorporation of 2 sulfur atoms into precursor Z to generate a dithiolene group. In the complex, serves as sulfur donor by being thiocarboxylated (-COSH) at its C-terminus by MOCS3. After interaction with MOCS2B, the sulfur is then transferred to precursor Z to form molybdopterin. The chain is Molybdopterin synthase sulfur carrier subunit from Caenorhabditis elegans.